Reading from the N-terminus, the 703-residue chain is uncharacterized protein (703 aa).

A run of 4 helical transmembrane segments spans residues 23-43, 69-89, 143-163, and 250-270; these read IAMS…DFLI, ALSG…AAGG, PVIS…ALEA, and PPEW…PIGL. The PNPLA domain occupies 23–335; sequence IAMSGAISAG…INNDPFEFVR (313 aa). A GXSXG motif is present at residues 72-76; that stretch reads GASAG. The active-site Nucleophile is the serine 74. Aspartate 322 (proton acceptor) is an active-site residue. The DGA/G motif lies at 322–324; sequence DGG. The next 3 membrane-spanning stretches (helical) occupy residues 357–377, 432–452, and 644–664; these read VIMI…EPPL, ETFS…LEAF, and ILST…APWT.

Its subcellular location is the cell membrane. This is an uncharacterized protein from Sinorhizobium fredii (strain NBRC 101917 / NGR234).